The sequence spans 417 residues: Probable glucuronosyltransferase GUT1 (417 aa).

Residues 1–15 (MGTRRRSARARARPP) lie on the Cytoplasmic side of the membrane. Residues 16-36 (LAMPLAVLLLFACSSGVAAAA) form a helical; Signal-anchor for type II membrane protein membrane-spanning segment. The Lumenal segment spans residues 37-417 (AQGIERIKDD…EGTREDLKPW (381 aa)). Residues N144 and N405 are each glycosylated (N-linked (GlcNAc...) asparagine).

Belongs to the glycosyltransferase 47 family.

It localises to the golgi apparatus membrane. Involved in the synthesis of glucuronoxylan hemicellulose in secondary cell walls. This is Probable glucuronosyltransferase GUT1 (GUT1) from Oryza sativa subsp. japonica (Rice).